We begin with the raw amino-acid sequence, 138 residues long: 1,4-dihydroxy-2-naphthoyl-CoA hydrolase (138 aa).

The active site involves D13.

The protein belongs to the 4-hydroxybenzoyl-CoA thioesterase family. DHNA-CoA hydrolase subfamily.

It carries out the reaction 1,4-dihydroxy-2-naphthoyl-CoA + H2O = 1,4-dihydroxy-2-naphthoate + CoA + H(+). The protein operates within cofactor biosynthesis; phylloquinone biosynthesis. Its pathway is quinol/quinone metabolism; 1,4-dihydroxy-2-naphthoate biosynthesis; 1,4-dihydroxy-2-naphthoate from chorismate: step 7/7. Catalyzes the hydrolysis of 1,4-dihydroxy-2-naphthoyl-CoA (DHNA-CoA) to 1,4-dihydroxy-2-naphthoate (DHNA), a reaction involved in phylloquinone (vitamin K1) biosynthesis. This chain is 1,4-dihydroxy-2-naphthoyl-CoA hydrolase, found in Microcystis aeruginosa (strain NIES-843 / IAM M-2473).